The sequence spans 276 residues: NADPH-dependent 7-cyano-7-deazaguanine reductase (276 aa).

83-85 lines the substrate pocket; it reads IES. 85–86 contacts NADPH; the sequence is SK. The Thioimide intermediate role is filled by cysteine 184. The active-site Proton donor is aspartate 191. A substrate-binding site is contributed by 223-224; the sequence is HE. 252–253 serves as a coordination point for NADPH; that stretch reads RG.

Belongs to the GTP cyclohydrolase I family. QueF type 2 subfamily. Homodimer.

Its subcellular location is the cytoplasm. It carries out the reaction 7-aminomethyl-7-carbaguanine + 2 NADP(+) = 7-cyano-7-deazaguanine + 2 NADPH + 3 H(+). It participates in tRNA modification; tRNA-queuosine biosynthesis. Catalyzes the NADPH-dependent reduction of 7-cyano-7-deazaguanine (preQ0) to 7-aminomethyl-7-deazaguanine (preQ1). This Pseudomonas putida (strain W619) protein is NADPH-dependent 7-cyano-7-deazaguanine reductase.